A 327-amino-acid polypeptide reads, in one-letter code: Lipoyl synthase (327 aa).

The [4Fe-4S] cluster site is built by Cys74, Cys79, Cys85, Cys100, Cys104, Cys107, and Ser314. A Radical SAM core domain is found at 86 to 303; the sequence is FSGGTATFMI…AEEGERMGFK (218 aa).

The protein belongs to the radical SAM superfamily. Lipoyl synthase family. The cofactor is [4Fe-4S] cluster.

It is found in the cytoplasm. It catalyses the reaction [[Fe-S] cluster scaffold protein carrying a second [4Fe-4S](2+) cluster] + N(6)-octanoyl-L-lysyl-[protein] + 2 oxidized [2Fe-2S]-[ferredoxin] + 2 S-adenosyl-L-methionine + 4 H(+) = [[Fe-S] cluster scaffold protein] + N(6)-[(R)-dihydrolipoyl]-L-lysyl-[protein] + 4 Fe(3+) + 2 hydrogen sulfide + 2 5'-deoxyadenosine + 2 L-methionine + 2 reduced [2Fe-2S]-[ferredoxin]. It functions in the pathway protein modification; protein lipoylation via endogenous pathway; protein N(6)-(lipoyl)lysine from octanoyl-[acyl-carrier-protein]: step 2/2. Its function is as follows. Catalyzes the radical-mediated insertion of two sulfur atoms into the C-6 and C-8 positions of the octanoyl moiety bound to the lipoyl domains of lipoate-dependent enzymes, thereby converting the octanoylated domains into lipoylated derivatives. This Pseudomonas paraeruginosa (strain DSM 24068 / PA7) (Pseudomonas aeruginosa (strain PA7)) protein is Lipoyl synthase.